The sequence spans 428 residues: UDP-N-acetylglucosamine 1-carboxyvinyltransferase 2 (428 aa).

22-23 is a binding site for phosphoenolpyruvate; sequence KN. Arg-92 provides a ligand contact to UDP-N-acetyl-alpha-D-glucosamine. Cys-116 (proton donor) is an active-site residue. Position 116 is a 2-(S-cysteinyl)pyruvic acid O-phosphothioketal (Cys-116). Residues 121 to 125, Asp-304, and Ile-326 each bind UDP-N-acetyl-alpha-D-glucosamine; that span reads RPIDQ.

This sequence belongs to the EPSP synthase family. MurA subfamily.

The protein resides in the cytoplasm. It catalyses the reaction phosphoenolpyruvate + UDP-N-acetyl-alpha-D-glucosamine = UDP-N-acetyl-3-O-(1-carboxyvinyl)-alpha-D-glucosamine + phosphate. It participates in cell wall biogenesis; peptidoglycan biosynthesis. In terms of biological role, cell wall formation. Adds enolpyruvyl to UDP-N-acetylglucosamine. The protein is UDP-N-acetylglucosamine 1-carboxyvinyltransferase 2 of Oceanobacillus iheyensis (strain DSM 14371 / CIP 107618 / JCM 11309 / KCTC 3954 / HTE831).